Reading from the N-terminus, the 397-residue chain is Protein-glutamate methylesterase/protein-glutamine glutaminase of group 2 operon (397 aa).

One can recognise a Response regulatory domain in the interval 21–139 (RVMIVDDSVV…EASAADTFHH (119 aa)). 4-aspartylphosphate is present on aspartate 72. Residues 199-388 (PFSTLAPKVL…LPLNQIGAKV (190 aa)) form the CheB-type methylesterase domain. Catalysis depends on residues serine 213, histidine 241, and aspartate 337.

It belongs to the CheB family. Post-translationally, phosphorylated by CheA. Phosphorylation of the N-terminal regulatory domain activates the methylesterase activity.

The protein resides in the cytoplasm. It carries out the reaction [protein]-L-glutamate 5-O-methyl ester + H2O = L-glutamyl-[protein] + methanol + H(+). It catalyses the reaction L-glutaminyl-[protein] + H2O = L-glutamyl-[protein] + NH4(+). Its function is as follows. Involved in chemotaxis. Part of a chemotaxis signal transduction system that modulates chemotaxis in response to various stimuli. Catalyzes the demethylation of specific methylglutamate residues introduced into the chemoreceptors (methyl-accepting chemotaxis proteins or MCP) by CheR. Also mediates the irreversible deamidation of specific glutamine residues to glutamic acid. This Bradyrhizobium diazoefficiens (strain JCM 10833 / BCRC 13528 / IAM 13628 / NBRC 14792 / USDA 110) protein is Protein-glutamate methylesterase/protein-glutamine glutaminase of group 2 operon.